A 419-amino-acid polypeptide reads, in one-letter code: Putative zinc metalloprotease SPy_1963/M5005_Spy1674 (419 aa).

H18 is a Zn(2+) binding site. E19 is a catalytic residue. H22 serves as a coordination point for Zn(2+). 4 consecutive transmembrane segments (helical) span residues 169–191 (LITN…ILLV), 301–323 (LAWS…FSLN), 343–365 (LESV…LIPI), and 392–411 (AYIT…AVTW). The region spanning 175–274 (GPMNNFILGI…LKTVAVKPQK (100 aa)) is the PDZ domain.

The protein belongs to the peptidase M50B family. Zn(2+) serves as cofactor.

The protein localises to the cell membrane. In Streptococcus pyogenes serotype M1, this protein is Putative zinc metalloprotease SPy_1963/M5005_Spy1674.